The following is a 502-amino-acid chain: Keratin-associated protein 16-1 (502 aa).

A run of 15 repeats spans residues 4–8 (CCCSR), 58–62 (CCQPS), 73–77 (CCEAT), 93–97 (CCEAT), 108–112 (CCQPV), 113–117 (CCEAT), 133–137 (CCEAT), 152–156 (CCETS), 177–181 (CCQPV), 187–191 (CCSAV), 212–216 (CCQPV), 222–226 (CCPSV), 272–276 (CCVQG), 292–296 (CCVSS), and 347–351 (CCRPG). The 15 X 5 AA repeats of C-C-X(3) stretch occupies residues 73–307 (CCEATICEPS…CQPVCPEPSP (235 aa)). The interval 435 to 502 (RQPCTDSDND…QPAASKPADR (68 aa)) is disordered. Positions 489–502 (AAAPQPAASKPADR) are enriched in low complexity.

It belongs to the KRTAP type 16 family. As to quaternary structure, interacts with hair keratins.

Functionally, in the hair cortex, hair keratin intermediate filaments are embedded in an interfilamentous matrix, consisting of hair keratin-associated proteins (KRTAP), which are essential for the formation of a rigid and resistant hair shaft through their extensive disulfide bond cross-linking with abundant cysteine residues of hair keratins. The matrix proteins include the high-sulfur and high-glycine-tyrosine keratins. This chain is Keratin-associated protein 16-1 (Krtap16-1), found in Mus musculus (Mouse).